A 513-amino-acid polypeptide reads, in one-letter code: Mannan endo-1,4-beta-mannosidase A and B (513 aa).

An N-terminal signal peptide occupies residues 1–26 (MKVYKKVAFVMAFIMFFSVLPTISMS). Residues 41 to 353 (QTTKNVYSWL…FNDSWVVNRG (313 aa)) enclose the GH26 domain. Histidine 132 provides a ligand contact to substrate. The active-site Proton donor is the glutamate 195. Substrate is bound by residues tryptophan 200 and tyrosine 270. Glutamate 295 serves as the catalytic Nucleophile. 429–430 (IK) contacts substrate.

The protein belongs to the glycosyl hydrolase 26 family.

It is found in the secreted. The enzyme catalyses Random hydrolysis of (1-&gt;4)-beta-D-mannosidic linkages in mannans, galactomannans and glucomannans.. Could be involved in the degradation of glucomannan and catalyzes the endo hydrolysis of beta-1,4-linked mannan, galactomannan and glucomannan. This chain is Mannan endo-1,4-beta-mannosidase A and B, found in Caldalkalibacillus mannanilyticus (strain DSM 16130 / CIP 109019 / JCM 10596 / AM-001) (Bacillus mannanilyticus).